Reading from the N-terminus, the 191-residue chain is Glutathione-dependent formaldehyde-activating enzyme (191 aa).

One can recognise a CENP-V/GFA domain in the interval 22–169 (FAGGTLQCLC…LTELGLTPYD (148 aa)). Positions 29, 31, 50, 52, 55, 97, and 100 each coordinate Zn(2+).

Belongs to the Gfa family. Zn(2+) is required as a cofactor.

It catalyses the reaction S-(hydroxymethyl)glutathione = glutathione + formaldehyde. The protein operates within one-carbon metabolism; formaldehyde degradation; formate from formaldehyde (glutathione route): step 1/3. Its function is as follows. Catalyzes the condensation of formaldehyde and glutathione to S-hydroxymethylglutathione. This Xanthomonas campestris pv. campestris (strain B100) protein is Glutathione-dependent formaldehyde-activating enzyme.